Here is a 78-residue protein sequence, read N- to C-terminus: Acyl carrier protein (78 aa).

In terms of domain architecture, Carrier spans 2-77 (SDIEQRVKQA…SAIDYVTKKL (76 aa)). Serine 37 carries the O-(pantetheine 4'-phosphoryl)serine modification.

The protein belongs to the acyl carrier protein (ACP) family. In terms of processing, 4'-phosphopantetheine is transferred from CoA to a specific serine of apo-ACP by AcpS. This modification is essential for activity because fatty acids are bound in thioester linkage to the sulfhydryl of the prosthetic group.

Its subcellular location is the cytoplasm. It functions in the pathway lipid metabolism; fatty acid biosynthesis. Its function is as follows. Carrier of the growing fatty acid chain in fatty acid biosynthesis. The polypeptide is Acyl carrier protein (Acinetobacter baumannii (strain AB307-0294)).